We begin with the raw amino-acid sequence, 404 residues long: 4-hydroxyphenylpyruvate dioxygenase (404 aa).

VOC domains lie at 28-163 (GYDH…FIQR) and 194-353 (YVDH…IFTK). Fe cation is bound by residues His-197, His-280, and Glu-364.

This sequence belongs to the 4HPPD family. It depends on Fe cation as a cofactor.

The enzyme catalyses 3-(4-hydroxyphenyl)pyruvate + O2 = homogentisate + CO2. Its pathway is amino-acid degradation; L-phenylalanine degradation; acetoacetate and fumarate from L-phenylalanine: step 3/6. Functionally, key enzyme in the degradation of tyrosine. The chain is 4-hydroxyphenylpyruvate dioxygenase (TFA) from Tetrahymena thermophila.